A 372-amino-acid chain; its full sequence is N-methyl-L-tryptophan oxidase (372 aa).

4–34 serves as a coordination point for FAD; it reads DLIIIGSGSVGAAAGYYATRAGLKVLMTDAH. Position 307 is an S-8alpha-FAD cysteine (Cys307).

The protein belongs to the MSOX/MTOX family. MTOX subfamily. Monomer. It depends on FAD as a cofactor.

The enzyme catalyses N(alpha)-methyl-L-tryptophan + O2 + H2O = L-tryptophan + formaldehyde + H2O2. In terms of biological role, catalyzes the oxidative demethylation of N-methyl-L-tryptophan. The chain is N-methyl-L-tryptophan oxidase from Salmonella typhimurium (strain LT2 / SGSC1412 / ATCC 700720).